Consider the following 454-residue polypeptide: Replicative DNA helicase DnaB (454 aa).

Residues 1–149 (MSELFSERIP…LDEADRKIME (149 aa)) are N-terminal domain (NTD). Positions 163 to 176 (KDILVQTYDNIEML) are linker helix. Residues 179–445 (RDGEITGIPT…NKFVNLERRF (267 aa)) form the SF4 helicase domain. The tract at residues 183–454 (ITGIPTGFTE…FDEAQIPPGA (272 aa)) is C-terminal domain (CTD). S213, G215, K216, T217, and A218 together coordinate ATP. The Nucleophile role is filled by E241. The ATP site is built by R250 and Q362. SsDNA is bound by residues R381, E382, and G384. Residues K418, Q419, and R420 each coordinate ATP.

The protein belongs to the helicase family. DnaB subfamily. Homohexamer. Interacts with DnaG primase, as DnaB(6):DnaG(3). Interacts with the N-terminus of DnaI (shown with DnaI of B.subtilis), forms a helicase DnaB(6):DnaI(6) complex. The DnaB-DnaI complex is disrupted by DnaD (DnaD and DnaI from B.subtilis). A stable complex DnaI(6):DnaB(6):DnaG(3) fragment can be isolated; DnaI and DnaG do not contact each other (DnaI in this complex is derived from B.subtilis). Forms a complex with DNA clamp loader protein tau (shown with B.subtilis HolA) tau(3):DnaB(6); a single ATP hydrolysis even is sufficient for complex formation.

The catalysed reaction is Couples ATP hydrolysis with the unwinding of duplex DNA at the replication fork by translocating in the 5'-3' direction. This creates two antiparallel DNA single strands (ssDNA). The leading ssDNA polymer is the template for DNA polymerase III holoenzyme which synthesizes a continuous strand.. It catalyses the reaction ATP + H2O = ADP + phosphate + H(+). Functionally, the main replicative DNA helicase, it participates in initiation and elongation during chromosome replication. Travels ahead of the DNA replisome, separating double-stranded (ds)DNA into templates for DNA synthesis. Binding of single-stranded (ss)DNA to the hexamer suggests a 2-nucleotide step size for the helicase and a hand-over-hand mechanism of DNA unwinding. Has ssDNA-stimulated ATPase activity. DnaG primase stimulates the helicase activity (the helicase direction was not determine but is probably 5'-3'). Loaded onto DNA by helicase loader DnaI (shown with DnaI of B.subtilis); ATP-binding enhances loading and subsequent ATP hydrolysis dissociates the complex, leaving helicase on the DNA. Binds ssDNA and less well dsDNA, in the presence of ADPNP (probably 5'-adenylyl beta, gamma-imidodiphosphate, but not ATP) binding to both DNAs is improved. The chain is Replicative DNA helicase DnaB from Geobacillus stearothermophilus (Bacillus stearothermophilus).